Reading from the N-terminus, the 141-residue chain is Auxin-responsive protein SAUR61 (141 aa).

The protein belongs to the ARG7 family.

Its subcellular location is the cell membrane. Functionally, may promote auxin-stimulated organ elongation, such as hypocotyls, stamen filaments and petals. This chain is Auxin-responsive protein SAUR61, found in Arabidopsis thaliana (Mouse-ear cress).